Consider the following 397-residue polypeptide: Zinc finger CCCH domain-containing protein 33 (397 aa).

5 consecutive C3H1-type zinc fingers follow at residues 40–68 (RPGE…HPRD), 85–113 (RIGQ…HPRN), 131–159 (RSNE…HPQP), 274–302 (RPGQ…HPRD), and 320–348 (RPGE…HPMR). A disordered region spans residues 361-397 (EVVETSTGKSRRLSVSETRQAATTSSGKDTTIDNTQQ). The segment covering 364 to 397 (ETSTGKSRRLSVSETRQAATTSSGKDTTIDNTQQ) has biased composition (polar residues).

Its subcellular location is the nucleus. In Arabidopsis thaliana (Mouse-ear cress), this protein is Zinc finger CCCH domain-containing protein 33 (ZFN1).